The chain runs to 332 residues: Gibberellin 2-beta-dioxygenase (332 aa).

Residues 175-280 (KSDSCFRLNH…RLSMIYFGGP (106 aa)) enclose the Fe2OG dioxygenase domain. Fe cation-binding residues include H204, D206, and H261. R271 is a catalytic residue.

It belongs to the iron/ascorbate-dependent oxidoreductase family. GA2OX subfamily. It depends on Fe cation as a cofactor.

It catalyses the reaction gibberellin A1 + 2-oxoglutarate + O2 = gibberellin A8 + succinate + CO2. Its pathway is plant hormone biosynthesis; gibberellin biosynthesis. Its function is as follows. Catalyzes the 2-beta-hydroxylation of several biologically active gibberellins, leading to the homeostatic regulation of their endogenous level. Catabolism of gibberellins (GAs) plays a central role in plant development. Converts GA9/GA20 to GA51/GA29 and GA4/GA1 to GA34/GA8. The sequence is that of Gibberellin 2-beta-dioxygenase (GA2OX1) from Phaseolus coccineus (Scarlet runner bean).